The chain runs to 387 residues: 3-ketoacyl-CoA thiolase (387 aa).

Cysteine 91 (acyl-thioester intermediate) is an active-site residue. Residues histidine 343 and cysteine 373 each act as proton acceptor in the active site.

Belongs to the thiolase-like superfamily. Thiolase family. Heterotetramer of two alpha chains (FadB) and two beta chains (FadA).

Its subcellular location is the cytoplasm. It catalyses the reaction an acyl-CoA + acetyl-CoA = a 3-oxoacyl-CoA + CoA. It functions in the pathway lipid metabolism; fatty acid beta-oxidation. Its function is as follows. Catalyzes the final step of fatty acid oxidation in which acetyl-CoA is released and the CoA ester of a fatty acid two carbons shorter is formed. The polypeptide is 3-ketoacyl-CoA thiolase (Shewanella sp. (strain ANA-3)).